Reading from the N-terminus, the 370-residue chain is Cytochrome b (370 aa).

Helical transmembrane passes span 25–45 (FGSM…FLAV), 69–90 (WLMQ…YIHI), 105–125 (WLSG…GYVL), and 170–190 (FFAL…LHVI). 2 residues coordinate heme b: H75 and H89. The heme b site is built by H174 and H188. A ubiquinone is bound at residue H193. The next 4 helical transmembrane spans lie at 218–238 (YKDL…VSFS), 280–300 (LGGA…PFTH), 312–332 (FMQM…WTAT), and 339–358 (FTLI…ISNP).

It belongs to the cytochrome b family. The cytochrome bc1 complex contains 3 respiratory subunits (MT-CYB, CYC1 and UQCRFS1), 2 core proteins (UQCRC1 and UQCRC2) and probably 6 low-molecular weight proteins. It depends on heme b as a cofactor.

Its subcellular location is the mitochondrion inner membrane. Component of the ubiquinol-cytochrome c reductase complex (complex III or cytochrome b-c1 complex) that is part of the mitochondrial respiratory chain. The b-c1 complex mediates electron transfer from ubiquinol to cytochrome c. Contributes to the generation of a proton gradient across the mitochondrial membrane that is then used for ATP synthesis. The protein is Cytochrome b (MT-CYB) of Eunectes murinus (Green anaconda).